Reading from the N-terminus, the 91-residue chain is Small ribosomal subunit protein uS17 (91 aa).

Belongs to the universal ribosomal protein uS17 family. Part of the 30S ribosomal subunit.

Functionally, one of the primary rRNA binding proteins, it binds specifically to the 5'-end of 16S ribosomal RNA. The chain is Small ribosomal subunit protein uS17 from Psychrobacter cryohalolentis (strain ATCC BAA-1226 / DSM 17306 / VKM B-2378 / K5).